Here is a 103-residue protein sequence, read N- to C-terminus: RNA-binding protein YlxQ (103 aa).

It belongs to the eukaryotic ribosomal protein eL8 family.

Functionally, RNA-binding protein that recognizes the K-turn motif present in ribosomal RNA, but also in box C/D and box C'/D' sRNAs. This chain is RNA-binding protein YlxQ, found in Enterococcus faecium (Streptococcus faecium).